Here is a 424-residue protein sequence, read N- to C-terminus: Putative pachytene checkpoint protein 2 (424 aa).

An ATP-binding site is contributed by 179–186; it reads GPPGTGKT.

It belongs to the AAA ATPase family. PCH2 subfamily.

Functionally, plays a key role in chromosome recombination during meiosis. The protein is Putative pachytene checkpoint protein 2 (pch-2) of Caenorhabditis elegans.